We begin with the raw amino-acid sequence, 549 residues long: Glucose-6-phosphate isomerase (549 aa).

N6-acetyllysine is present on residues Lys80, Lys228, and Lys234. Glu355 functions as the Proton donor in the catalytic mechanism. Catalysis depends on residues His386 and Lys514.

This sequence belongs to the GPI family.

It is found in the cytoplasm. The catalysed reaction is alpha-D-glucose 6-phosphate = beta-D-fructose 6-phosphate. The protein operates within carbohydrate biosynthesis; gluconeogenesis. It participates in carbohydrate degradation; glycolysis; D-glyceraldehyde 3-phosphate and glycerone phosphate from D-glucose: step 2/4. Functionally, catalyzes the reversible isomerization of glucose-6-phosphate to fructose-6-phosphate. This Escherichia coli O127:H6 (strain E2348/69 / EPEC) protein is Glucose-6-phosphate isomerase.